Reading from the N-terminus, the 379-residue chain is Succinate--CoA ligase [ADP-forming] subunit beta (379 aa).

One can recognise an ATP-grasp domain in the interval lysine 9–isoleucine 235. 4 residues coordinate ATP: lysine 45, glutamate 91, isoleucine 94, and glutamate 99. Positions 191 and 205 each coordinate Mg(2+). Substrate contacts are provided by residues asparagine 255 and glycine 312–threonine 314.

The protein belongs to the succinate/malate CoA ligase beta subunit family. Heterotetramer of two alpha and two beta subunits. Mg(2+) is required as a cofactor.

It carries out the reaction succinate + ATP + CoA = succinyl-CoA + ADP + phosphate. The catalysed reaction is GTP + succinate + CoA = succinyl-CoA + GDP + phosphate. It participates in carbohydrate metabolism; tricarboxylic acid cycle; succinate from succinyl-CoA (ligase route): step 1/1. Its function is as follows. Succinyl-CoA synthetase functions in the citric acid cycle (TCA), coupling the hydrolysis of succinyl-CoA to the synthesis of either ATP or GTP and thus represents the only step of substrate-level phosphorylation in the TCA. The beta subunit provides nucleotide specificity of the enzyme and binds the substrate succinate, while the binding sites for coenzyme A and phosphate are found in the alpha subunit. This is Succinate--CoA ligase [ADP-forming] subunit beta from Staphylothermus marinus (strain ATCC 43588 / DSM 3639 / JCM 9404 / F1).